Reading from the N-terminus, the 275-residue chain is Dermonecrotic toxin SpeSicTox-betaIIA2iii (275 aa).

Residue H5 is part of the active site. Residues E25 and D27 each coordinate Mg(2+). H41 acts as the Nucleophile in catalysis. 2 disulfide bridges follow: C45/C51 and C47/C190. D85 serves as a coordination point for Mg(2+).

This sequence belongs to the arthropod phospholipase D family. Class II subfamily. The cofactor is Mg(2+). In terms of tissue distribution, expressed by the venom gland.

It is found in the secreted. The catalysed reaction is an N-(acyl)-sphingosylphosphocholine = an N-(acyl)-sphingosyl-1,3-cyclic phosphate + choline. It catalyses the reaction an N-(acyl)-sphingosylphosphoethanolamine = an N-(acyl)-sphingosyl-1,3-cyclic phosphate + ethanolamine. The enzyme catalyses a 1-acyl-sn-glycero-3-phosphocholine = a 1-acyl-sn-glycero-2,3-cyclic phosphate + choline. It carries out the reaction a 1-acyl-sn-glycero-3-phosphoethanolamine = a 1-acyl-sn-glycero-2,3-cyclic phosphate + ethanolamine. Its function is as follows. Dermonecrotic toxins cleave the phosphodiester linkage between the phosphate and headgroup of certain phospholipids (sphingolipid and lysolipid substrates), forming an alcohol (often choline) and a cyclic phosphate. This toxin acts on sphingomyelin (SM). It may also act on ceramide phosphoethanolamine (CPE), lysophosphatidylcholine (LPC) and lysophosphatidylethanolamine (LPE), but not on lysophosphatidylserine (LPS), and lysophosphatidylglycerol (LPG). It acts by transphosphatidylation, releasing exclusively cyclic phosphate products as second products. Induces dermonecrosis, hemolysis, increased vascular permeability, edema, inflammatory response, and platelet aggregation. The chain is Dermonecrotic toxin SpeSicTox-betaIIA2iii from Sicarius peruensis (Six-eyed sand spider).